Reading from the N-terminus, the 1067-residue chain is FHIP family protein GL19323 (1067 aa).

The segment covering 1 to 11 has biased composition (polar residues); that stretch reads MSWLRSSPLRQ. Disordered regions lie at residues 1–31, 503–525, and 832–1013; these read MSWL…GSLR, LARP…QPIQ, and NENS…SEPA. Phosphoserine occurs at positions 508 and 835. Residues 842–858 show a composition bias toward low complexity; the sequence is QPQTTLSQQQQQQQGQQ. The span at 859–878 shows a compositional bias: polar residues; that stretch reads RSAYATLSAATPVQATQTSA. The segment covering 893 to 904 has biased composition (low complexity); it reads SKSISSMFSRRS. The segment covering 918–949 has biased composition (polar residues); it reads LVGNNNSGSGQSQPFSSTGTGTCETSLSTNPQ. Over residues 950–979 the composition is skewed to low complexity; it reads SGAAAARSTGTATTANGNSSNSNISIGGST. The segment covering 980 to 996 has biased composition (polar residues); sequence QTLSGHSNTTTYSSSTL.

It belongs to the FHIP family.

This chain is FHIP family protein GL19323, found in Drosophila persimilis (Fruit fly).